The following is a 256-amino-acid chain: Indole-3-glycerol phosphate synthase (256 aa).

This sequence belongs to the TrpC family.

The enzyme catalyses 1-(2-carboxyphenylamino)-1-deoxy-D-ribulose 5-phosphate + H(+) = (1S,2R)-1-C-(indol-3-yl)glycerol 3-phosphate + CO2 + H2O. The protein operates within amino-acid biosynthesis; L-tryptophan biosynthesis; L-tryptophan from chorismate: step 4/5. The chain is Indole-3-glycerol phosphate synthase from Chlorobaculum tepidum (strain ATCC 49652 / DSM 12025 / NBRC 103806 / TLS) (Chlorobium tepidum).